The following is a 789-amino-acid chain: 1-phosphatidylinositol 4,5-bisphosphate phosphodiesterase delta-3 (789 aa).

The 110-residue stretch at 63-172 folds into the PH domain; that stretch reads RAMLRGSRLR…WVRGLTKLRA (110 aa). Residues 73-101 are substrate binding; it reads KIRSRTWHKERLYRLQEDGLSVWFQRRIP. Serine 105 carries the post-translational modification Phosphoserine. 3 EF-hand domains span residues 182-217, 218-253, and 250-285; these read RLDHWIHSYLHRADSNQDSKMSFKEIKSLLRMVNVD, MNDMYAYLLFKECDHSNNDRLEGAEIEEFLRRLLKR, and LLKRPELEEIFHQYSGEDRVLSAPELLEFLEDQGEE. Residues aspartate 195, asparagine 197, aspartate 199, lysine 201, glutamate 206, aspartate 231, serine 233, asparagine 235, arginine 237, and glutamate 242 each contribute to the Ca(2+) site. In terms of domain architecture, PI-PLC X-box spans 337–482; that stretch reads QDMNQPLAHY…LKGRVLVKGK (146 aa). The active site involves histidine 352. Positions 353, 382, and 384 each coordinate Ca(2+). The active site involves histidine 397. Glutamate 431 is a binding site for Ca(2+). The interval 461–519 is disordered; sequence SPNPEELPSPEQLKGRVLVKGKKLPAARSEDGRALSDREEEEEDDEEEEEEVEAAAQRR. Substrate contacts are provided by lysine 480 and lysine 482. Basic and acidic residues predominate over residues 488–497; that stretch reads RSEDGRALSD. Serine 496 bears the Phosphoserine mark. The segment covering 498–513 has biased composition (acidic residues); sequence REEEEEDDEEEEEEVE. The PI-PLC Y-box domain maps to 528–644; it reads LSALAVYCHA…GYVLKPACLR (117 aa). Serine 557 contributes to the substrate binding site. Serine 573 carries the phosphoserine modification. Substrate is bound at residue arginine 584. The C2 domain occupies 644–769; the sequence is RQPDSTFDPE…QGYRHIHLLS (126 aa). Residues isoleucine 683, aspartate 685, asparagine 709, aspartate 738, tyrosine 739, and aspartate 740 each coordinate Ca(2+).

It depends on Ca(2+) as a cofactor. In terms of tissue distribution, present in corneal epithelial cells (at protein level).

It localises to the membrane. The protein localises to the cytoplasm. Its subcellular location is the cleavage furrow. It carries out the reaction a 1,2-diacyl-sn-glycero-3-phospho-(1D-myo-inositol-4,5-bisphosphate) + H2O = 1D-myo-inositol 1,4,5-trisphosphate + a 1,2-diacyl-sn-glycerol + H(+). Its activity is regulated as follows. Strongly activated by phosphatidic acid. Inhibited by phosphatidylethanolamine (PtdEtn), phosphatidylcholine (PtdCho), sphingomyelin and phosphatidylserine (PtdSer). In terms of biological role, hydrolyzes the phosphatidylinositol 4,5-bisphosphate (PIP2) to generate 2 second messenger molecules diacylglycerol (DAG) and inositol 1,4,5-trisphosphate (IP3). DAG mediates the activation of protein kinase C (PKC), while IP3 releases Ca(2+) from intracellular stores. Essential for trophoblast and placental development. May participate in cytokinesis by hydrolyzing PIP2 at the cleavage furrow. Regulates neurite outgrowth through the inhibition of RhoA/Rho kinase signaling. The sequence is that of 1-phosphatidylinositol 4,5-bisphosphate phosphodiesterase delta-3 from Homo sapiens (Human).